A 370-amino-acid chain; its full sequence is Phosphate acyltransferase (370 aa).

A disordered region spans residues 349–370; it reads SAGRAGQDAPDEMAAPGRSEKR.

It belongs to the PlsX family. In terms of assembly, homodimer. Probably interacts with PlsY.

The protein localises to the cytoplasm. It carries out the reaction a fatty acyl-[ACP] + phosphate = an acyl phosphate + holo-[ACP]. It participates in lipid metabolism; phospholipid metabolism. Functionally, catalyzes the reversible formation of acyl-phosphate (acyl-PO(4)) from acyl-[acyl-carrier-protein] (acyl-ACP). This enzyme utilizes acyl-ACP as fatty acyl donor, but not acyl-CoA. The sequence is that of Phosphate acyltransferase from Cereibacter sphaeroides (strain ATCC 17023 / DSM 158 / JCM 6121 / CCUG 31486 / LMG 2827 / NBRC 12203 / NCIMB 8253 / ATH 2.4.1.) (Rhodobacter sphaeroides).